A 205-amino-acid polypeptide reads, in one-letter code: Small ribosomal subunit protein uS5 (205 aa).

The S5 DRBM domain maps to 49 to 112 (LVDEVLCIDM…TNAKLNIVKV (64 aa)).

The protein belongs to the universal ribosomal protein uS5 family. Part of the 30S ribosomal subunit. Contacts protein S4.

Its function is as follows. With S4 and S12 plays an important role in translational accuracy. This is Small ribosomal subunit protein uS5 from Methanocorpusculum labreanum (strain ATCC 43576 / DSM 4855 / Z).